We begin with the raw amino-acid sequence, 90 residues long: Putative cytochrome c oxidase subunit 5b-like (90 aa).

Positions 43, 67, and 70 each coordinate Zn(2+).

It belongs to the cytochrome c oxidase subunit 5B (TC 3.D.4.11) family.

This chain is Putative cytochrome c oxidase subunit 5b-like, found in Arabidopsis thaliana (Mouse-ear cress).